Consider the following 364-residue polypeptide: G-protein coupled receptor 4 (364 aa).

Residues 1-8 lie on the Extracellular side of the membrane; sequence MCNVSQDS. The N-linked (GlcNAc...) asparagine glycan is linked to asparagine 3. Residues 9-45 form a helical membrane-spanning segment; it reads CNIDSRLDSLFPPTLYIFVMVIGFPTNCLSLWAAFVQ. Cystine bridges form between cysteine 9/cysteine 258 and cysteine 90/cysteine 168. At 46 to 49 the chain is on the cytoplasmic side; it reads VRQK. The chain crosses the membrane as a helical span at residues 50-80; sequence NELGVYLLNLSISDLLYIATLPPWVNYFLHQ. The Extracellular portion of the chain corresponds to 81–85; sequence DNWIH. A helical membrane pass occupies residues 86–121; the sequence is GPESCKLFGFILYTNIYISIGFLSCISVDRYLAVAH. The Cytoplasmic portion of the chain corresponds to 122–129; sequence PLKFAKVR. A helical transmembrane segment spans residues 130 to 156; sequence RVKTAAVVSAVVWAIEIGANSAPLFHN. At 157-172 the chain is on the extracellular side; the sequence is ELFEDRFNHTFCFEKY. Positions 157–172 are extracellular loop 2 (ECL2); it reads ELFEDRFNHTFCFEKY. Asparagine 164 carries N-linked (GlcNAc...) asparagine glycosylation. A helical transmembrane segment spans residues 173–210; that stretch reads PMEDWVAQMNLYRVFVGFLFPWVLMLFCYQGILRAVKT. Over 211–214 the chain is Cytoplasmic; it reads NVST. Residues 215–250 traverse the membrane as a helical segment; sequence EREEKAKIKRLALSLIAILLFCFAPYHLILLSRSVV. The Extracellular portion of the chain corresponds to 251–260; that stretch reads YLGQPCDCTF. The chain crosses the membrane as a helical span at residues 261-289; it reads EENIFTAYHVSLALTSLNCVADPILYCLA. Residues 290-364 are Cytoplasmic-facing; it reads NEGARSEVTR…RVRRRRDCKC (75 aa).

Belongs to the G-protein coupled receptor 1 family.

It is found in the cell membrane. With respect to regulation, activated by a network of residues that connects an extracellular-facing cavity to Glu-145, a conserved charged residue buried in the transmembrane core of the receptor. Protonation likely drives conformational changes in extracellular loop 2 (ECL2), which stabilizes movement of transmembrane 3 (TM3) and a series of rearrangements that connect the extracellular-facing cavity to Glu-145, a residue only conserved in proton-sensing G-protein coupled receptors. In terms of biological role, proton-sensing G-protein coupled receptor activated by extracellular pH, which is required to monitor pH changes and generate adaptive reactions. Ligand binding causes a conformation change that triggers signaling via guanine nucleotide-binding proteins (G proteins) and modulates the activity of downstream effectors, such as adenylate cyclase. In Callorhinchus milii (Ghost shark), this protein is G-protein coupled receptor 4.